Here is a 101-residue protein sequence, read N- to C-terminus: NADH-quinone oxidoreductase subunit K (101 aa).

3 helical membrane passes run Leu4–Ile24, Ile30–Phe50, and Ile61–Leu81.

Belongs to the complex I subunit 4L family. NDH-1 is composed of 14 different subunits. Subunits NuoA, H, J, K, L, M, N constitute the membrane sector of the complex.

The protein resides in the cell inner membrane. The enzyme catalyses a quinone + NADH + 5 H(+)(in) = a quinol + NAD(+) + 4 H(+)(out). In terms of biological role, NDH-1 shuttles electrons from NADH, via FMN and iron-sulfur (Fe-S) centers, to quinones in the respiratory chain. The immediate electron acceptor for the enzyme in this species is believed to be ubiquinone. Couples the redox reaction to proton translocation (for every two electrons transferred, four hydrogen ions are translocated across the cytoplasmic membrane), and thus conserves the redox energy in a proton gradient. The chain is NADH-quinone oxidoreductase subunit K from Coxiella burnetii (strain CbuG_Q212) (Coxiella burnetii (strain Q212)).